Reading from the N-terminus, the 257-residue chain is Chlorocatechol 1,2-dioxygenase (257 aa).

Tyr134, Tyr169, His194, and His196 together coordinate Fe cation.

The protein belongs to the intradiol ring-cleavage dioxygenase family. It depends on Fe(3+) as a cofactor.

It carries out the reaction 4-chlorocatechol + O2 = 3-chloro-cis,cis-muconate + 2 H(+). It catalyses the reaction 3,5-dichlorocatechol + O2 = (2E,4E)-2,4-dichloromuconate + 2 H(+). The protein is Chlorocatechol 1,2-dioxygenase (clcA) of Rhodococcus opacus (Nocardia opaca).